The chain runs to 457 residues: Aromatic amino acid transport protein AroP (457 aa).

Topologically, residues 1–19 (MMEGQQHGEQLKRGLKNRH) are cytoplasmic. The chain crosses the membrane as a helical span at residues 20–40 (IQLIALGGAIGTGLFLGSASV). Residues 41-42 (IQ) are Periplasmic-facing. A helical transmembrane segment spans residues 43–63 (SAGPGIILGYAIAGFIAFLIM). The Cytoplasmic portion of the chain corresponds to 64-86 (RQLGEMVVEEPVAGSFSHFAYKY). Residues 87 to 107 (WGSFAGFASGWNYWVLYVLVA) traverse the membrane as a helical segment. Over 108 to 117 (MAELTAVGKY) the chain is Periplasmic. The chain crosses the membrane as a helical span at residues 118–138 (IQFWYPEIPTWVSAAVFFVVI). The Cytoplasmic segment spans residues 139–155 (NAINLTNVTVFGEMEFW). The chain crosses the membrane as a helical span at residues 156-176 (FAIIKVIAVVAMIIFGGWLLF). The Periplasmic portion of the chain corresponds to 177–201 (SGNGGPQASVSNLWDQGGFLPHGFT). The helical transmembrane segment at 202–222 (GLVMMMAIIMFSFGGLELVGI) threads the bilayer. The Cytoplasmic portion of the chain corresponds to 223–240 (TAAEADNPEQSIPKATNQ). A helical transmembrane segment spans residues 241–261 (VIYRILIFYIGSLAVLLSLMP). At 262-271 (WTRVTADTSP) the chain is on the periplasmic side. Residues 272–292 (FVLIFHELGDTFVANALNIVV) traverse the membrane as a helical segment. At 293–333 (LTAALSVYNSCVYCNSRMLFGLAQQGNAPKALASVDKRGVP) the chain is on the cytoplasmic side. A helical membrane pass occupies residues 334–354 (VNTILVSALVTALCVLINYLA). Over 355-358 (PESA) the chain is Periplasmic. The helical transmembrane segment at 359–379 (FGLLMALVVSALVINWAMISL) threads the bilayer. Residues 380–407 (AHMKFRRAKQEQGVVTRFPALLYPLGNW) are Cytoplasmic-facing. The helical transmembrane segment at 408–428 (ICLLFMAVVLVIMLMTPGMAI) threads the bilayer. Serine 429 is a topological domain (periplasmic). A helical transmembrane segment spans residues 430-450 (VYLIPVWLVVLGIGYLFKEKT). At 451-457 (AKAVKAH) the chain is on the cytoplasmic side.

This sequence belongs to the amino acid-polyamine-organocation (APC) superfamily. Amino acid transporter (AAT) (TC 2.A.3.1) family.

The protein localises to the cell inner membrane. It carries out the reaction L-phenylalanine(in) + H(+)(in) = L-phenylalanine(out) + H(+)(out). The enzyme catalyses L-tryptophan(in) + H(+)(in) = L-tryptophan(out) + H(+)(out). The catalysed reaction is L-tyrosine(in) + H(+)(in) = L-tyrosine(out) + H(+)(out). Permease that is involved in the active transport across the cytoplasmic membrane of all three aromatic amino acids, phenylalanine, tyrosine and tryptophan. This Escherichia coli O157:H7 protein is Aromatic amino acid transport protein AroP (aroP).